Consider the following 401-residue polypeptide: L-rhamnonate dehydratase (401 aa).

Residues histidine 29 and arginine 55 each contribute to the substrate site. Aspartate 222, glutamate 248, and glutamate 276 together coordinate Mg(2+). Histidine 325 acts as the Proton acceptor in catalysis. Glutamate 345 contributes to the substrate binding site.

It belongs to the mandelate racemase/muconate lactonizing enzyme family. RhamD subfamily. In terms of assembly, homooctamer; tetramer of dimers. The cofactor is Mg(2+).

The catalysed reaction is L-rhamnonate = 2-dehydro-3-deoxy-L-rhamnonate + H2O. In terms of biological role, catalyzes the dehydration of L-rhamnonate to 2-keto-3-deoxy-L-rhamnonate (KDR). This is L-rhamnonate dehydratase from Klebsiella pneumoniae subsp. pneumoniae (strain ATCC 700721 / MGH 78578).